The sequence spans 270 residues: Transmembrane protein 176B (270 aa).

Transmembrane regions (helical) follow at residues 65–85, 95–115, 127–147, and 209–229; these read LALG…GVCL, ASGC…GAIV, VSSL…VLCV, and LFLA…GVGL. 4 positions are modified to phosphoserine: serine 236, serine 245, serine 254, and serine 258. A disordered region spans residues 237-270; sequence SQPLNEEGSEKRLLGENSVPPSPSREQTSTAIVL. Over residues 260 to 270 the composition is skewed to polar residues; it reads SREQTSTAIVL.

It belongs to the TMEM176 family.

It localises to the nucleus membrane. Its function is as follows. May play a role in the process of maturation of dendritic cells. Required for the development of cerebellar granule cells. The sequence is that of Transmembrane protein 176B (TMEM176B) from Pongo abelii (Sumatran orangutan).